We begin with the raw amino-acid sequence, 553 residues long: Coiled-coil domain-containing protein 85A (553 aa).

A compositionally biased stretch (low complexity) spans 1 to 28 (MSKAAGGAAAAAAAAESCSPAPAGSSAA). Residues 1–37 (MSKAAGGAAAAAAAAESCSPAPAGSSAAPPAPVEDLS) are disordered. Coiled coils occupy residues 43–109 (ELLQ…RDLC) and 137–169 (MHKE…KELC). 3 disordered regions span residues 203–414 (YVRD…GMNE), 433–461 (ENRM…GWGS), and 491–518 (SGAD…QPEP). The span at 209 to 220 (DGSSTSSTGSTD) shows a compositional bias: low complexity. Positions 236 to 260 (HLQKPRSEGSPEHSKHRSASPEHPQ) are enriched in basic and acidic residues. A compositionally biased stretch (gly residues) spans 376 to 389 (GGSGGSGGSGGGSR). Over residues 391–403 (GTLRRQAQEDGSP) the composition is skewed to basic and acidic residues. The stretch at 412 to 443 (MNESTLSYVRQLEARVRQLEEENRMLPQASQN) forms a coiled coil. Polar residues predominate over residues 439-455 (QASQNRRQPPTRNSSNM). Residues 491 to 508 (SGADGSNSSPNSAASFSG) are compositionally biased toward low complexity. At R541 the chain carries Asymmetric dimethylarginine.

Belongs to the CCDC85 family. May interact with ARVCF; CTNND1; CTNND2 and PKP4.

The protein localises to the cell junction. The protein resides in the adherens junction. In terms of biological role, may play a role in cell-cell adhesion and epithelium development through its interaction with proteins of the beta-catenin family. This chain is Coiled-coil domain-containing protein 85A (CCDC85A), found in Homo sapiens (Human).